The primary structure comprises 186 residues: MAVRLLRVASAALGDTAVRWQPLVGPRAGNRGPGGSIWLGLGGRAAAARTLSLSARAWSSSEDKITVHFINRDGKTLTTQGKVGDSLLDVVIENNLDIDGFGACEGTLACSTCHLIFEDHIFEKLEAITDEENDMLDLAYGLTDRSRLGCQICLTKAMDNMTVRVPEAVADARESIDLGKNSSKLE.

Residues 1-58 (MAVRLLRVASAALGDTAVRWQPLVGPRAGNRGPGGSIWLGLGGRAAAARTLSLSARAW) constitute a mitochondrion transit peptide. At serine 61 the chain carries Phosphoserine. Lysine 64 is modified (N6-acetyllysine; alternate). The residue at position 64 (lysine 64) is an N6-succinyllysine; alternate. The 2Fe-2S ferredoxin-type domain maps to 65-169 (ITVHFINRDG…NMTVRVPEAV (105 aa)). Positions 104, 110, 113, and 150 each coordinate [2Fe-2S] cluster. At lysine 156 the chain carries N6-succinyllysine. Serine 175 bears the Phosphoserine mark.

Belongs to the adrenodoxin/putidaredoxin family. In terms of assembly, interacts with CYP11A1. It depends on [2Fe-2S] cluster as a cofactor.

It is found in the mitochondrion matrix. Functionally, essential for the synthesis of various steroid hormones. Participates in the reduction of mitochondrial cytochrome P450 for steroidogenesis. Transfers electrons from adrenodoxin reductase to CYP11A1, a cytochrome P450 that catalyzes cholesterol side-chain cleavage. Does not form a ternary complex with adrenodoxin reductase and CYP11A1 but shuttles between the two enzymes to transfer electrons. The polypeptide is Adrenodoxin, mitochondrial (FDX1) (Sus scrofa (Pig)).